Consider the following 350-residue polypeptide: GTPase Obg (350 aa).

The 159-residue stretch at methionine 1 to leucine 159 folds into the Obg domain. The segment at glycine 17–glycine 43 is disordered. Positions glycine 33–glycine 43 are enriched in gly residues. An OBG-type G domain is found at alanine 160–glycine 334. Residues glycine 166–serine 173, phenylalanine 191–alanine 195, aspartate 213–glycine 216, asparagine 284–aspartate 287, and serine 315–leucine 317 each bind GTP. Mg(2+) contacts are provided by serine 173 and threonine 193.

It belongs to the TRAFAC class OBG-HflX-like GTPase superfamily. OBG GTPase family. Monomer. Mg(2+) serves as cofactor.

The protein localises to the cytoplasm. An essential GTPase which binds GTP, GDP and possibly (p)ppGpp with moderate affinity, with high nucleotide exchange rates and a fairly low GTP hydrolysis rate. Plays a role in control of the cell cycle, stress response, ribosome biogenesis and in those bacteria that undergo differentiation, in morphogenesis control. This is GTPase Obg from Thiobacillus denitrificans (strain ATCC 25259 / T1).